A 509-amino-acid chain; its full sequence is Steroid 17-alpha-hydroxylase/17,20 lyase (509 aa).

Cys-440 provides a ligand contact to heme.

It belongs to the cytochrome P450 family. Heme is required as a cofactor.

The protein resides in the endoplasmic reticulum membrane. Its subcellular location is the microsome membrane. The enzyme catalyses a C21-steroid + reduced [NADPH--hemoprotein reductase] + O2 = a 17alpha-hydroxy-C21-steroid + oxidized [NADPH--hemoprotein reductase] + H2O + H(+). It carries out the reaction progesterone + reduced [NADPH--hemoprotein reductase] + O2 = 17alpha-hydroxyprogesterone + oxidized [NADPH--hemoprotein reductase] + H2O + H(+). It catalyses the reaction pregnenolone + reduced [NADPH--hemoprotein reductase] + O2 = 17alpha-hydroxypregnenolone + oxidized [NADPH--hemoprotein reductase] + H2O + H(+). The catalysed reaction is 17alpha-hydroxyprogesterone + reduced [NADPH--hemoprotein reductase] + O2 = androst-4-ene-3,17-dione + acetate + oxidized [NADPH--hemoprotein reductase] + H2O + 2 H(+). The enzyme catalyses 17alpha-hydroxyprogesterone + reduced [NADPH--hemoprotein reductase] + O2 = 16alpha,17alpha-dihydroxyprogesterone + oxidized [NADPH--hemoprotein reductase] + H2O + H(+). It carries out the reaction 16alpha,17alpha-dihydroxyprogesterone + reduced [NADPH--hemoprotein reductase] + O2 = 6beta,16alpha,17alpha-trihydroxyprogesterone + oxidized [NADPH--hemoprotein reductase] + H2O + H(+). It catalyses the reaction 17alpha-hydroxypregnenolone + reduced [NADPH--hemoprotein reductase] + O2 = 3beta-hydroxyandrost-5-en-17-one + acetate + oxidized [NADPH--hemoprotein reductase] + H2O + 2 H(+). The catalysed reaction is 16alpha,17alpha-dihydroxypregnenolone + reduced [NADPH--hemoprotein reductase] + O2 = 3beta,16alpha-dihydroxy-androst-5-en-17-one + acetate + oxidized [NADPH--hemoprotein reductase] + H2O + 2 H(+). The enzyme catalyses 3beta-hydroxyandrost-5-en-17-one + reduced [NADPH--hemoprotein reductase] + O2 = 3beta,16alpha-dihydroxy-androst-5-en-17-one + oxidized [NADPH--hemoprotein reductase] + H2O + H(+). It carries out the reaction androst-4-ene-3,17-dione + reduced [NADPH--hemoprotein reductase] + O2 = 16alpha-hydroxyandrost-4-ene-3,17-dione + oxidized [NADPH--hemoprotein reductase] + H2O + H(+). Its pathway is steroid hormone biosynthesis. It participates in steroid biosynthesis; glucocorticoid biosynthesis. With respect to regulation, regulated predominantly by intracellular cAMP levels. The 17,20-lyase activity is stimulated by cytochrome b5, which acts as an allosteric effector increasing the Vmax of the lyase activity. A cytochrome P450 monooxygenase involved in corticoid and androgen biosynthesis. Catalyzes 17-alpha hydroxylation of C21 steroids, which is common for both pathways. A second oxidative step, required only for androgen synthesis, involves an acyl-carbon cleavage. The 17-alpha hydroxy intermediates, as part of adrenal glucocorticoids biosynthesis pathway, are precursors of cortisol. Hydroxylates steroid hormones, pregnenolone and progesterone to form 17-alpha hydroxy metabolites, followed by the cleavage of the C17-C20 bond to form C19 steroids, dehydroepiandrosterone (DHEA) and androstenedione. Has 16-alpha hydroxylase activity. Catalyzes 16-alpha hydroxylation of 17-alpha hydroxy pregnenolone, followed by the cleavage of the C17-C20 bond to form 16-alpha-hydroxy DHEA. Also 16-alpha hydroxylates androgens, relevant for estriol synthesis. Mechanistically, uses molecular oxygen inserting one oxygen atom into a substrate, and reducing the second into a water molecule, with two electrons provided by NADPH via cytochrome P450 reductase (CPR; NADPH-ferrihemoprotein reductase). This Peromyscus leucopus (White-footed mouse) protein is Steroid 17-alpha-hydroxylase/17,20 lyase (Cyp17a1).